An 84-amino-acid polypeptide reads, in one-letter code: NAD(P)H-quinone oxidoreductase subunit O (84 aa).

Belongs to the complex I NdhO subunit family. As to quaternary structure, NDH-1 can be composed of about 15 different subunits; different subcomplexes with different compositions have been identified which probably have different functions.

It is found in the cellular thylakoid membrane. It catalyses the reaction a plastoquinone + NADH + (n+1) H(+)(in) = a plastoquinol + NAD(+) + n H(+)(out). It carries out the reaction a plastoquinone + NADPH + (n+1) H(+)(in) = a plastoquinol + NADP(+) + n H(+)(out). NDH-1 shuttles electrons from an unknown electron donor, via FMN and iron-sulfur (Fe-S) centers, to quinones in the respiratory and/or the photosynthetic chain. The immediate electron acceptor for the enzyme in this species is believed to be plastoquinone. Couples the redox reaction to proton translocation, and thus conserves the redox energy in a proton gradient. Cyanobacterial NDH-1 also plays a role in inorganic carbon-concentration. The polypeptide is NAD(P)H-quinone oxidoreductase subunit O (Synechococcus sp. (strain CC9902)).